Consider the following 261-residue polypeptide: Endomucin (261 aa).

An N-terminal signal peptide occupies residues 1-18; the sequence is MELLQVTILFLLPSICSS. 4 N-linked (GlcNAc...) asparagine glycosylation sites follow: Asn19, Asn28, Asn98, and Asn104. Over 19–190 the chain is Extracellular; the sequence is NSTGVLEAAN…TSATSRSYSS (172 aa). Composition is skewed to polar residues over residues 118–134 and 146–171; these read TLQS…SIKT and ASPS…SQVI. A disordered region spans residues 118–183; that stretch reads TLQSSKPKTE…EGGKNASTSA (66 aa). N-linked (GlcNAc...) asparagine glycosylation is found at Asn164 and Asn178. A helical transmembrane segment spans residues 191 to 211; that stretch reads IILPVVIALIVITLSVFVLVG. Over 212-261 the chain is Cytoplasmic; the sequence is LYRMCWKADPGTPENGNDQPQSDKESVKLLTVKTISHESGEHSAQGKTKN. At Ser237 the chain carries Phosphoserine.

Highly O-glycosylated. Sialic acid-rich glycoprotein. In terms of tissue distribution, expressed in heart, kidney and lung.

The protein localises to the cell membrane. Its subcellular location is the membrane. The protein resides in the secreted. Its function is as follows. Endothelial sialomucin, also called endomucin or mucin-like sialoglycoprotein, which interferes with the assembly of focal adhesion complexes and inhibits interaction between cells and the extracellular matrix. This is Endomucin (EMCN) from Homo sapiens (Human).